Here is a 170-residue protein sequence, read N- to C-terminus: Small ribosomal subunit protein uS5 (170 aa).

Residues 13-76 (LTEKLIGVNR…DQARRSMVKI (64 aa)) form the S5 DRBM domain.

This sequence belongs to the universal ribosomal protein uS5 family. In terms of assembly, part of the 30S ribosomal subunit. Contacts proteins S4 and S8.

Its function is as follows. With S4 and S12 plays an important role in translational accuracy. In terms of biological role, located at the back of the 30S subunit body where it stabilizes the conformation of the head with respect to the body. The sequence is that of Small ribosomal subunit protein uS5 from Laribacter hongkongensis (strain HLHK9).